Reading from the N-terminus, the 763-residue chain is Thiamine biosynthesis multifunctional protein ThiED (763 aa).

A thiamine-phosphate synthase region spans residues 1–210; that stretch reads MTDFSLYLVT…ANPAAAATRL (210 aa). Residues 37-41 and Asn-69 contribute to the 4-amino-2-methyl-5-(diphosphooxymethyl)pyrimidine site; that span reads QLRDK. 2 residues coordinate Mg(2+): Asp-70 and Asp-88. Residue Ser-107 coordinates 4-amino-2-methyl-5-(diphosphooxymethyl)pyrimidine. 140 to 142 provides a ligand contact to 2-[(2R,5Z)-2-carboxy-4-methylthiazol-5(2H)-ylidene]ethyl phosphate; sequence TAT. Lys-143 provides a ligand contact to 4-amino-2-methyl-5-(diphosphooxymethyl)pyrimidine. Residues Gly-174 and 194 to 195 each bind 2-[(2R,5Z)-2-carboxy-4-methylthiazol-5(2H)-ylidene]ethyl phosphate; that span reads VS. The hydroxymethylpyrimidine/phosphomethylpyrimidine kinase stretch occupies residues 245–500; it reads LSIAGTDPTG…GTGNGPVDHG (256 aa). 4-amino-5-hydroxymethyl-2-methylpyrimidine is bound at residue Gln-282. The segment at 550–763 is thiaminase-2; that stretch reads FTRALWEASG…RHGWTMVGSS (214 aa).

This sequence in the N-terminal section; belongs to the thiamine-phosphate synthase family. The protein in the central section; belongs to the ThiD family. It in the C-terminal section; belongs to the thiaminase-2 family. Mg(2+) serves as cofactor.

The catalysed reaction is 2-[(2R,5Z)-2-carboxy-4-methylthiazol-5(2H)-ylidene]ethyl phosphate + 4-amino-2-methyl-5-(diphosphooxymethyl)pyrimidine + 2 H(+) = thiamine phosphate + CO2 + diphosphate. It carries out the reaction 2-(2-carboxy-4-methylthiazol-5-yl)ethyl phosphate + 4-amino-2-methyl-5-(diphosphooxymethyl)pyrimidine + 2 H(+) = thiamine phosphate + CO2 + diphosphate. It catalyses the reaction 4-methyl-5-(2-phosphooxyethyl)-thiazole + 4-amino-2-methyl-5-(diphosphooxymethyl)pyrimidine + H(+) = thiamine phosphate + diphosphate. The enzyme catalyses 4-amino-5-hydroxymethyl-2-methylpyrimidine + ATP = 4-amino-2-methyl-5-(phosphooxymethyl)pyrimidine + ADP + H(+). The catalysed reaction is 4-amino-2-methyl-5-(phosphooxymethyl)pyrimidine + ATP = 4-amino-2-methyl-5-(diphosphooxymethyl)pyrimidine + ADP. The protein operates within cofactor biosynthesis; thiamine diphosphate biosynthesis; 4-amino-2-methyl-5-diphosphomethylpyrimidine from 5-amino-1-(5-phospho-D-ribosyl)imidazole: step 3/3. It functions in the pathway cofactor biosynthesis; thiamine diphosphate biosynthesis; thiamine phosphate from 4-amino-2-methyl-5-diphosphomethylpyrimidine and 4-methyl-5-(2-phosphoethyl)-thiazole: step 1/1. Functionally, condenses 4-methyl-5-(beta-hydroxyethyl)thiazole monophosphate (THZ-P) and 2-methyl-4-amino-5-hydroxymethyl pyrimidine pyrophosphate (HMP-PP) to form thiamine monophosphate (TMP). In terms of biological role, catalyzes the phosphorylation of hydroxymethylpyrimidine phosphate (HMP-P) to HMP-PP, and of HMP to HMP-P. This Corynebacterium glutamicum (strain ATCC 13032 / DSM 20300 / JCM 1318 / BCRC 11384 / CCUG 27702 / LMG 3730 / NBRC 12168 / NCIMB 10025 / NRRL B-2784 / 534) protein is Thiamine biosynthesis multifunctional protein ThiED (theD).